The following is a 68-amino-acid chain: uncharacterized protein (68 aa).

Residues 1–15 (MTIIFLICLDASTQS) form the signal peptide. Residues 14–68 (QSTTNNSINNNNNNNNNNNNNNNNNNNNNNNNNNNNNNNNNNNNNNSKVFDFNIF) form a disordered region. Residues N18 and N58 are each glycosylated (N-linked (GlcNAc...) asparagine). A compositionally biased stretch (low complexity) spans 22–59 (NNNNNNNNNNNNNNNNNNNNNNNNNNNNNNNNNNNNNN).

The protein localises to the secreted. This is an uncharacterized protein from Dictyostelium discoideum (Social amoeba).